The chain runs to 173 residues: dCTP deaminase, dUMP-forming (173 aa).

DCTP is bound by residues 93-98 (RSSIGR), aspartate 111, 119-121 (TLE), glutamine 138, and tyrosine 151. Glutamate 121 serves as the catalytic Proton donor/acceptor.

This sequence belongs to the dCTP deaminase family. In terms of assembly, homotrimer.

The catalysed reaction is dCTP + 2 H2O = dUMP + NH4(+) + diphosphate. It functions in the pathway pyrimidine metabolism; dUMP biosynthesis; dUMP from dCTP: step 1/1. Its function is as follows. Bifunctional enzyme that catalyzes both the deamination of dCTP to dUTP and the hydrolysis of dUTP to dUMP without releasing the toxic dUTP intermediate. The chain is dCTP deaminase, dUMP-forming from Clostridium acetobutylicum (strain ATCC 824 / DSM 792 / JCM 1419 / IAM 19013 / LMG 5710 / NBRC 13948 / NRRL B-527 / VKM B-1787 / 2291 / W).